The primary structure comprises 306 residues: N(1)-aminopropylagmatine ureohydrolase (306 aa).

Mn(2+)-binding residues include His121, Asp145, His147, Asp149, Asp228, and Asp230.

This sequence belongs to the arginase family. It depends on Mn(2+) as a cofactor.

It carries out the reaction N(1)-(3-aminopropyl)agmatine + H2O = urea + spermidine. Its pathway is amine and polyamine biosynthesis; spermidine biosynthesis. In terms of biological role, ureohydrolase involved in the biosynthesis of spermidine via the carboxyaminopropylagmatine (CAPA) pathway. Catalyzes the conversion of aminopropylagmatine (APA) to spermidine and urea. Is highly specific to APA and incapable of releasing measurable urea from CAPA, agmatine, arginine, guanidine, guanidinobutyrate and guanidinopropionate. In Synechocystis sp. (strain ATCC 27184 / PCC 6803 / Kazusa), this protein is N(1)-aminopropylagmatine ureohydrolase.